A 198-amino-acid chain; its full sequence is Large ribosomal subunit protein bL12m (198 aa).

The transit peptide at 1 to 36 directs the protein to the mitochondrion; the sequence is MLPSATSLLRGPCLGLRAAALRLVRQQVPHVCAVRL. Residues 106 to 115 are compositionally biased toward low complexity; that stretch reads GAAPAPTAPE. Positions 106-126 are disordered; that stretch reads GAAPAPTAPEAAEEDVPKQKE. 4 positions are modified to N6-acetyllysine: Lys125, Lys138, Lys142, and Lys144. At Lys150 the chain carries N6-acetyllysine; alternate. Lys150 bears the N6-succinyllysine; alternate mark. Lys150 participates in a covalent cross-link: Glycyl lysine isopeptide (Lys-Gly) (interchain with G-Cter in ubiquitin). Lys162 carries the post-translational modification N6-succinyllysine. 2 positions are modified to N6-acetyllysine: Lys163 and Lys173. Position 178 is an N6-acetyllysine; alternate (Lys178). Lys178 carries the N6-succinyllysine; alternate modification. At Lys185 the chain carries N6-acetyllysine.

This sequence belongs to the bacterial ribosomal protein bL12 family. In terms of assembly, component of the mitochondrial ribosome large subunit (39S) which comprises a 16S rRNA and about 50 distinct proteins. Interacts with NOA1. In terms of processing, two mature forms are produced by differential two-step proteolytic cleavage. Cleaved by the mitochondrial processing protease to produce the long mature form and subsequently by the mitochondrial intermediate protease to produce the short mature form. Post-translationally, in the presence of CUL3, undergoes 'Lys-63'-linked ubiquitination at Lys-150 which results in proteasomal degradation.

It localises to the mitochondrion matrix. As a component of the mitochondrial large ribosomal subunit, plays a role in mitochondrial translation. When present in mitochondria as a free protein not associated with the ribosome, associates with mitochondrial RNA polymerase POLRMT to activate transcription. Required for POLRMT stability. In Bos taurus (Bovine), this protein is Large ribosomal subunit protein bL12m (MRPL12).